A 219-amino-acid chain; its full sequence is Small ribosomal subunit protein uS3c (219 aa).

In terms of domain architecture, KH type-2 spans 39 to 118; sequence IRSFIRKYIQ…RLNIVITKVE (80 aa).

The protein belongs to the universal ribosomal protein uS3 family. Part of the 30S ribosomal subunit.

It is found in the plastid. The polypeptide is Small ribosomal subunit protein uS3c (rps3) (Cuscuta obtusiflora (Peruvian dodder)).